The chain runs to 300 residues: B1 kinase (300 aa).

Positions tryptophan 16–phenylalanine 282 constitute a Protein kinase domain. ATP contacts are provided by residues isoleucine 22–isoleucine 30 and lysine 45. The Proton acceptor role is filled by aspartate 147.

Belongs to the protein kinase superfamily. Ser/Thr protein kinase family. Poxviruses subfamily. Interacts with host JIP1; this interaction increases the amount of MAPK bound to JIP1 and subsequently increases the activity of transcription factors, such as JUN, that respond to these complexes. Interacts with protein OPG198; this interaction inhibits the repressive activity of OPG198 pseudokinase on viral replication factory formation. It depends on Mg(2+) as a cofactor. In terms of processing, autophosphorylated.

The protein localises to the virion. The protein resides in the host cytoplasm. The enzyme catalyses L-seryl-[protein] + ATP = O-phospho-L-seryl-[protein] + ADP + H(+). It catalyses the reaction L-threonyl-[protein] + ATP = O-phospho-L-threonyl-[protein] + ADP + H(+). Functionally, essential serine/threonine-protein kinase that plays different role in the viral life cycle. Phosphorylates the host small ribosomal protein RACK1 thereby customizing the ribosomes to a state optimal for viral mRNAs (which contain poly-A leaders) but not for host mRNAs. Facilitates viral DNA replication by inhibiting host BANF1, a cellular host defense responsive to foreign DNA. Phosphorylates host BANF1 on serine and threonine residues; this leads to BANF1 relocalization to the cytoplasm, loss of dimerization and impaired DNA binding activity. Indeed, BANF1 activity depends on its DNA-binding property which is blocked by VPK1-mediated phosphorylation. Required for viral intermediate genes expression, probably by inhibiting host BANF1. Modulates cellular responses via host JUN by two different mechanisms, either by direct phosphorylation or by modulation of upstream JIP1-MAPK complexes. Seems to participate in the accumulation/processing of late proteins and thus in virion maturation. In addition, inhibits B12 repressive activity on viral DNA replication via a phosphorylation-dependent mechanism. This is B1 kinase (OPG187) from Homo sapiens (Human).